The primary structure comprises 618 residues: Carbamoyl phosphate synthase large chain, C-terminal section (618 aa).

The oligomerization domain stretch occupies residues 1–78; sequence MDMEKLKEIL…ETFVYKEQDE (78 aa). Residues 79-477 are carbamoyl phosphate synthetic domain; it reads SNPSDRKKVI…YKAQLSANME (399 aa). The region spanning 208-399 is the ATP-grasp domain; that stretch reads SKLLKKLNIP…LAKLATKIML (192 aa). Residues arginine 244, lysine 283, leucine 285, glutamate 290, glycine 315, valine 316, histidine 317, serine 318, glutamine 358, and glutamate 370 each coordinate ATP. The Mg(2+) site is built by glutamine 358, glutamate 370, and asparagine 372. Residues glutamine 358, glutamate 370, and asparagine 372 each contribute to the Mn(2+) site. Residues 476–618 enclose the MGS-like domain; that stretch reads MELPIVGNVF…ELDARIKNRF (143 aa). Residues 478–618 form an allosteric domain region; sequence LPIVGNVFIS…ELDARIKNRF (141 aa).

It belongs to the CarB family. As to quaternary structure, composed of two chains; the small (or glutamine) chain promotes the hydrolysis of glutamine to ammonia, which is used by the large (or ammonia) chain to synthesize carbamoyl phosphate. Tetramer of heterodimers (alpha,beta)4. Requires Mg(2+) as cofactor. The cofactor is Mn(2+).

The enzyme catalyses hydrogencarbonate + L-glutamine + 2 ATP + H2O = carbamoyl phosphate + L-glutamate + 2 ADP + phosphate + 2 H(+). The catalysed reaction is hydrogencarbonate + NH4(+) + 2 ATP = carbamoyl phosphate + 2 ADP + phosphate + 2 H(+). It functions in the pathway amino-acid biosynthesis; L-arginine biosynthesis; carbamoyl phosphate from bicarbonate: step 1/1. Its pathway is pyrimidine metabolism; UMP biosynthesis via de novo pathway; (S)-dihydroorotate from bicarbonate: step 1/3. Large subunit of the glutamine-dependent carbamoyl phosphate synthetase (CPSase). CPSase catalyzes the formation of carbamoyl phosphate from the ammonia moiety of glutamine, carbonate, and phosphate donated by ATP, constituting the first step of 2 biosynthetic pathways, one leading to arginine and/or urea and the other to pyrimidine nucleotides. The large subunit (synthetase) binds the substrates ammonia (free or transferred from glutamine from the small subunit), hydrogencarbonate and ATP and carries out an ATP-coupled ligase reaction, activating hydrogencarbonate by forming carboxy phosphate which reacts with ammonia to form carbamoyl phosphate. This is Carbamoyl phosphate synthase large chain, C-terminal section (carB2) from Methanocaldococcus jannaschii (strain ATCC 43067 / DSM 2661 / JAL-1 / JCM 10045 / NBRC 100440) (Methanococcus jannaschii).